The primary structure comprises 161 residues: Beta-lactoglobulin-1 (161 aa).

2 cysteine pairs are disulfide-bonded: Cys66/Cys159 and Cys106/Cys119.

It belongs to the calycin superfamily. Lipocalin family. Monomer. Synthesized in mammary gland and secreted in milk.

It localises to the secreted. Functionally, primary component of whey, it binds retinol and is probably involved in the transport of that molecule. This chain is Beta-lactoglobulin-1 (LGB1), found in Canis lupus familiaris (Dog).